A 321-amino-acid chain; its full sequence is Quinol oxidase subunit 2 (321 aa).

Positions 1–25 (MIFLFRALKPLLVLALLTVVFVLGG) are cleaved as a signal peptide. A lipid anchor (N-palmitoyl cysteine) is attached at cysteine 26. Residue cysteine 26 is the site of S-diacylglycerol cysteine attachment. The next 2 membrane-spanning stretches (helical) occupy residues 49-69 (SIGF…IILV) and 90-110 (TFLE…LSVP). The interval 294–321 (QAVSPHSKTDPFENVKENEFKKSDDTEE) is disordered. Over residues 300–321 (SKTDPFENVKENEFKKSDDTEE) the composition is skewed to basic and acidic residues.

It belongs to the cytochrome c oxidase subunit 2 family.

It localises to the cell membrane. The catalysed reaction is 2 a quinol + O2 = 2 a quinone + 2 H2O. Functionally, catalyzes quinol oxidation with the concomitant reduction of oxygen to water. Major component for energy conversion during vegetative growth. Subunit II transfers the electrons from a quinol to the binuclear center of the catalytic subunit I. This chain is Quinol oxidase subunit 2 (qoxA), found in Bacillus spizizenii (strain ATCC 23059 / NRRL B-14472 / W23) (Bacillus subtilis subsp. spizizenii).